The sequence spans 493 residues: 3-octaprenyl-4-hydroxybenzoate carboxy-lyase (493 aa).

N172 provides a ligand contact to Mn(2+). Prenylated FMN contacts are provided by residues 175–177 (IYR), 189–191 (RWL), and 194–195 (RG). Residue E238 participates in Mn(2+) binding. The active-site Proton donor is D287.

The protein belongs to the UbiD family. Homohexamer. Requires prenylated FMN as cofactor. Mn(2+) serves as cofactor.

It is found in the cell membrane. It carries out the reaction a 4-hydroxy-3-(all-trans-polyprenyl)benzoate + H(+) = a 2-(all-trans-polyprenyl)phenol + CO2. The protein operates within cofactor biosynthesis; ubiquinone biosynthesis. Its function is as follows. Catalyzes the decarboxylation of 3-octaprenyl-4-hydroxy benzoate to 2-octaprenylphenol, an intermediate step in ubiquinone biosynthesis. The sequence is that of 3-octaprenyl-4-hydroxybenzoate carboxy-lyase from Shewanella amazonensis (strain ATCC BAA-1098 / SB2B).